The following is a 137-amino-acid chain: Large ribosomal subunit protein uL16 (137 aa).

The protein belongs to the universal ribosomal protein uL16 family. As to quaternary structure, part of the 50S ribosomal subunit.

In terms of biological role, binds 23S rRNA and is also seen to make contacts with the A and possibly P site tRNAs. In Mycoplasma mycoides subsp. mycoides SC (strain CCUG 32753 / NCTC 10114 / PG1), this protein is Large ribosomal subunit protein uL16.